The following is a 299-amino-acid chain: Tetrahydromethanopterin S-methyltransferase subunit E (299 aa).

The next 6 membrane-spanning stretches (helical) occupy residues 57–77 (AISG…TIAW), 80–100 (INAG…AAIV), 133–153 (IGPI…AAYL), 158–178 (LGNP…VGAI), 226–246 (YFCS…IIFL), and 262–282 (VTKT…AAVI).

This sequence belongs to the MtrE family. The complex is composed of 8 subunits; MtrA, MtrB, MtrC, MtrD, MtrE, MtrF, MtrG and MtrH.

The protein localises to the cell membrane. The catalysed reaction is 5-methyl-5,6,7,8-tetrahydromethanopterin + coenzyme M + 2 Na(+)(in) = 5,6,7,8-tetrahydromethanopterin + methyl-coenzyme M + 2 Na(+)(out). It functions in the pathway one-carbon metabolism; methanogenesis from CO(2); methyl-coenzyme M from 5,10-methylene-5,6,7,8-tetrahydromethanopterin: step 2/2. Part of a complex that catalyzes the formation of methyl-coenzyme M and tetrahydromethanopterin from coenzyme M and methyl-tetrahydromethanopterin. This is an energy-conserving, sodium-ion translocating step. This is Tetrahydromethanopterin S-methyltransferase subunit E from Methanococcus maripaludis (strain C7 / ATCC BAA-1331).